The sequence spans 150 residues: Cytochrome c oxidase subunit 5A, mitochondrial (150 aa).

The transit peptide at 1 to 41 (MLGAALRRCAVAAAARAGPRGLLHSAPTPGPAAAIQSVRCY) directs the protein to the mitochondrion. Residues 2 to 17 (LGAALRRCAVAAAARA) carry the SIFI-degron motif. N6-acetyllysine is present on residues Lys87 and Lys113. Residue Thr141 is modified to Phosphothreonine.

This sequence belongs to the cytochrome c oxidase subunit 5A family. In terms of assembly, component of the cytochrome c oxidase (complex IV, CIV), a multisubunit enzyme composed of 14 subunits. The complex is composed of a catalytic core of 3 subunits MT-CO1, MT-CO2 and MT-CO3, encoded in the mitochondrial DNA, and 11 supernumerary subunits COX4I, COX5A, COX5B, COX6A, COX6B, COX6C, COX7A, COX7B, COX7C, COX8 and NDUFA4, which are encoded in the nuclear genome. The complex exists as a monomer or a dimer and forms supercomplexes (SCs) in the inner mitochondrial membrane with NADH-ubiquinone oxidoreductase (complex I, CI) and ubiquinol-cytochrome c oxidoreductase (cytochrome b-c1 complex, complex III, CIII), resulting in different assemblies (supercomplex SCI(1)III(2)IV(1) and megacomplex MCI(2)III(2)IV(2)). Interacts with AFG1L. Interacts with RAB5IF. In terms of processing, in response to mitochondrial stress, the precursor protein is ubiquitinated by the SIFI complex in the cytoplasm before mitochondrial import, leading to its degradation. Within the SIFI complex, UBR4 initiates ubiquitin chain that are further elongated or branched by KCMF1.

Its subcellular location is the mitochondrion inner membrane. The protein operates within energy metabolism; oxidative phosphorylation. Its function is as follows. Component of the cytochrome c oxidase, the last enzyme in the mitochondrial electron transport chain which drives oxidative phosphorylation. The respiratory chain contains 3 multisubunit complexes succinate dehydrogenase (complex II, CII), ubiquinol-cytochrome c oxidoreductase (cytochrome b-c1 complex, complex III, CIII) and cytochrome c oxidase (complex IV, CIV), that cooperate to transfer electrons derived from NADH and succinate to molecular oxygen, creating an electrochemical gradient over the inner membrane that drives transmembrane transport and the ATP synthase. Cytochrome c oxidase is the component of the respiratory chain that catalyzes the reduction of oxygen to water. Electrons originating from reduced cytochrome c in the intermembrane space (IMS) are transferred via the dinuclear copper A center (CU(A)) of subunit 2 and heme A of subunit 1 to the active site in subunit 1, a binuclear center (BNC) formed by heme A3 and copper B (CU(B)). The BNC reduces molecular oxygen to 2 water molecules using 4 electrons from cytochrome c in the IMS and 4 protons from the mitochondrial matrix. The protein is Cytochrome c oxidase subunit 5A, mitochondrial (COX5A) of Plecturocebus donacophilus (Bolivian gray titi monkey).